Reading from the N-terminus, the 190-residue chain is Adenylate kinase (190 aa).

Residue 11 to 16 coordinates ATP; the sequence is GAGKGT. Positions 31–60 are NMP; sequence STGDIFRFNIKNETELGKLAKTFMDKGDLV. AMP-binding positions include Thr32, Arg37, 58-60, 86-89, and Gln93; these read DLV and GFPR. Residues 127-137 form an LID region; it reads ERGKTSGRVDD. Residue Arg128 participates in ATP binding. The AMP site is built by Arg134 and Arg146. Position 174 (Gly174) interacts with ATP.

This sequence belongs to the adenylate kinase family. In terms of assembly, monomer.

It localises to the cytoplasm. The enzyme catalyses AMP + ATP = 2 ADP. Its pathway is purine metabolism; AMP biosynthesis via salvage pathway; AMP from ADP: step 1/1. Its function is as follows. Catalyzes the reversible transfer of the terminal phosphate group between ATP and AMP. Plays an important role in cellular energy homeostasis and in adenine nucleotide metabolism. The polypeptide is Adenylate kinase (Flavobacterium psychrophilum (strain ATCC 49511 / DSM 21280 / CIP 103535 / JIP02/86)).